The chain runs to 255 residues: Hydroxyacylglutathione hydrolase (255 aa).

7 residues coordinate Zn(2+): His53, His55, Asp57, His58, His111, Asp128, and His166.

Belongs to the metallo-beta-lactamase superfamily. Glyoxalase II family. In terms of assembly, monomer. The cofactor is Zn(2+).

The catalysed reaction is an S-(2-hydroxyacyl)glutathione + H2O = a 2-hydroxy carboxylate + glutathione + H(+). The protein operates within secondary metabolite metabolism; methylglyoxal degradation; (R)-lactate from methylglyoxal: step 2/2. Functionally, thiolesterase that catalyzes the hydrolysis of S-D-lactoyl-glutathione to form glutathione and D-lactic acid. This Nitrosomonas eutropha (strain DSM 101675 / C91 / Nm57) protein is Hydroxyacylglutathione hydrolase.